Reading from the N-terminus, the 252-residue chain is Triosephosphate isomerase (252 aa).

9–11 (NWK) provides a ligand contact to substrate. The active-site Electrophile is the His100. Catalysis depends on Glu171, which acts as the Proton acceptor. Residues Gly177, Ser216, and 237–238 (GG) each bind substrate.

The protein belongs to the triosephosphate isomerase family. As to quaternary structure, homodimer.

It localises to the cytoplasm. It carries out the reaction D-glyceraldehyde 3-phosphate = dihydroxyacetone phosphate. It functions in the pathway carbohydrate biosynthesis; gluconeogenesis. It participates in carbohydrate degradation; glycolysis; D-glyceraldehyde 3-phosphate from glycerone phosphate: step 1/1. In terms of biological role, involved in the gluconeogenesis. Catalyzes stereospecifically the conversion of dihydroxyacetone phosphate (DHAP) to D-glyceraldehyde-3-phosphate (G3P). In Polynucleobacter asymbioticus (strain DSM 18221 / CIP 109841 / QLW-P1DMWA-1) (Polynucleobacter necessarius subsp. asymbioticus), this protein is Triosephosphate isomerase.